A 55-amino-acid chain; its full sequence is Large ribosomal subunit protein bL33 (55 aa).

This sequence belongs to the bacterial ribosomal protein bL33 family.

This chain is Large ribosomal subunit protein bL33, found in Beijerinckia indica subsp. indica (strain ATCC 9039 / DSM 1715 / NCIMB 8712).